A 178-amino-acid chain; its full sequence is Putative pre-16S rRNA nuclease (178 aa).

Basic and acidic residues predominate over residues 1–18 (MDHAEQGPDRPGVDDPGR). Positions 1–21 (MDHAEQGPDRPGVDDPGRGRR) are disordered.

It belongs to the YqgF nuclease family.

It is found in the cytoplasm. In terms of biological role, could be a nuclease involved in processing of the 5'-end of pre-16S rRNA. This chain is Putative pre-16S rRNA nuclease, found in Rhodococcus jostii (strain RHA1).